We begin with the raw amino-acid sequence, 128 residues long: Ribonuclease P protein component (128 aa).

The protein belongs to the RnpA family. Consists of a catalytic RNA component (M1 or rnpB) and a protein subunit.

It catalyses the reaction Endonucleolytic cleavage of RNA, removing 5'-extranucleotides from tRNA precursor.. In terms of biological role, RNaseP catalyzes the removal of the 5'-leader sequence from pre-tRNA to produce the mature 5'-terminus. It can also cleave other RNA substrates such as 4.5S RNA. The protein component plays an auxiliary but essential role in vivo by binding to the 5'-leader sequence and broadening the substrate specificity of the ribozyme. In Prochlorococcus marinus (strain NATL1A), this protein is Ribonuclease P protein component.